We begin with the raw amino-acid sequence, 111 residues long: Small ribosomal subunit protein bS16 (111 aa).

The protein belongs to the bacterial ribosomal protein bS16 family.

The chain is Small ribosomal subunit protein bS16 from Rickettsia felis (strain ATCC VR-1525 / URRWXCal2) (Rickettsia azadi).